Consider the following 503-residue polypeptide: Maturase K (503 aa).

This sequence belongs to the intron maturase 2 family. MatK subfamily.

It localises to the plastid. The protein localises to the chloroplast. Usually encoded in the trnK tRNA gene intron. Probably assists in splicing its own and other chloroplast group II introns. This is Maturase K from Cercocarpus betuloides (Mountain mahogany).